The chain runs to 300 residues: Ribosomal protein L11 methyltransferase (300 aa).

Positions 152, 173, 195, and 234 each coordinate S-adenosyl-L-methionine.

This sequence belongs to the methyltransferase superfamily. PrmA family.

The protein resides in the cytoplasm. It catalyses the reaction L-lysyl-[protein] + 3 S-adenosyl-L-methionine = N(6),N(6),N(6)-trimethyl-L-lysyl-[protein] + 3 S-adenosyl-L-homocysteine + 3 H(+). Methylates ribosomal protein L11. The protein is Ribosomal protein L11 methyltransferase of Burkholderia cenocepacia (strain ATCC BAA-245 / DSM 16553 / LMG 16656 / NCTC 13227 / J2315 / CF5610) (Burkholderia cepacia (strain J2315)).